The following is a 655-amino-acid chain: Probable replication factor A 73 kDa subunit (655 aa).

The interval 195–217 (NRAAAPEATRARAVPPPARRTAS) is disordered. Residues 196–207 (RAAAPEATRARA) show a composition bias toward low complexity. Residues 236–326 (FKIHGMVSRK…TLRSDSIIEA (91 aa)) constitute a DNA-binding region (OB). The C4-type zinc finger occupies 518 to 539 (CASEGCQKKLVGENGDYRCEKC).

The protein belongs to the replication factor A protein 1 family. Component of the heterotrimeric canonical replication protein A complex (RPA).

The protein resides in the nucleus. In terms of biological role, as part of the heterotrimeric replication protein A complex (RPA/RP-A), binds and stabilizes single-stranded DNA intermediates, that form during DNA replication or upon DNA stress. It prevents their reannealing and in parallel, recruits and activates different proteins and complexes involved in DNA metabolism. Thereby, it plays an essential role both in DNA replication and the cellular response to DNA damage. The sequence is that of Probable replication factor A 73 kDa subunit from Caenorhabditis elegans.